The primary structure comprises 530 residues: CTP synthase (530 aa).

The interval 1–264 (MPKLIIVTGG…GDFLTRRLRL (264 aa)) is amidoligase domain. Position 13 (serine 13) interacts with CTP. A UTP-binding site is contributed by serine 13. 14 to 19 (GVGKGV) contributes to the ATP binding site. Tyrosine 54 contributes to the L-glutamine binding site. An ATP-binding site is contributed by aspartate 71. The Mg(2+) site is built by aspartate 71 and glutamate 139. CTP is bound by residues 146 to 148 (DYE), 185 to 190 (KTKPLQ), and lysine 221. UTP is bound by residues 185–190 (KTKPLQ) and lysine 221. Positions 289-530 (SVGMCGKYVE…LLKAALFAKR (242 aa)) constitute a Glutamine amidotransferase type-1 domain. Glycine 351 lines the L-glutamine pocket. Residue cysteine 378 is the Nucleophile; for glutamine hydrolysis of the active site. Residues 379-382 (FGMQ), glutamate 402, and arginine 459 each bind L-glutamine. Residues histidine 504 and glutamate 506 contribute to the active site.

Belongs to the CTP synthase family. In terms of assembly, homotetramer.

The catalysed reaction is UTP + L-glutamine + ATP + H2O = CTP + L-glutamate + ADP + phosphate + 2 H(+). It carries out the reaction L-glutamine + H2O = L-glutamate + NH4(+). It catalyses the reaction UTP + NH4(+) + ATP = CTP + ADP + phosphate + 2 H(+). Its pathway is pyrimidine metabolism; CTP biosynthesis via de novo pathway; CTP from UDP: step 2/2. With respect to regulation, allosterically activated by GTP, when glutamine is the substrate; GTP has no effect on the reaction when ammonia is the substrate. The allosteric effector GTP functions by stabilizing the protein conformation that binds the tetrahedral intermediate(s) formed during glutamine hydrolysis. Inhibited by the product CTP, via allosteric rather than competitive inhibition. Functionally, catalyzes the ATP-dependent amination of UTP to CTP with either L-glutamine or ammonia as the source of nitrogen. Regulates intracellular CTP levels through interactions with the four ribonucleotide triphosphates. This Pyrobaculum aerophilum (strain ATCC 51768 / DSM 7523 / JCM 9630 / CIP 104966 / NBRC 100827 / IM2) protein is CTP synthase.